The primary structure comprises 1052 residues: MIKKIMKMAKIYKSKNAMIDAVPVIDRESKMFLQYPVNSNGCCNFTVIDKDKDFFSNIKSTKSNSKFLQEMFIDGTKRKPYLDIEHYYPSEKEFKKDFKRIIPQIVNDIIQVFAKEYDQVIKLSDVLLLNSSGQSSDGYKLSVHVVVSPKNKTFYYTNSKKIENNTAYHLYASLININSEYKDKENFNDKPHGYLDEQVYRKDATLRMIGSCKYPTGDRCLDPIDSKTLEKLDLTDKQKLNYLISYIDDTKPTILLETPIIQQTTISKTKIQHNEPTKTNINNKLLDLVKKYHPSAKQYGSSKEGYYNFNYDNRTEKCPLSGVTHDSNGFYVIEKSSGCFLKCYSKKCHGKSMHLGYVDETDQFVDEAHQINTKYLLQDPLVPKLLEDWINKGKTFAIKSAMGTGKTYLIKHILDKYKLNKVLWITHRQTLTKSLYGSFKDYGFVSYMDTQNCLYQYDKVLVQIDSLMRIKEFDMFENKQLVKKYDLVIIDEIEGCLSHYESPYLNKPDIDSRYIFNFMIDVIRFSNKLIVLDADISIRTQLFIEHIDKITNKGGNYIMINNSYQPITKTFTITNDEGDFDTKLFADIKAKKNICVVSMSAGAVNKIAVELNKMGTKYVSHTSKSNDSLKKNLEDVNNFWKQQQVVMFSPSIISGIDFNEIHFDKMYCIIKSGNKTCDPRSFLQMVGRIRHLGDQNIFCWYQQIPIFIDKTNKIIPKLQSDVYTFDDLLSYYRYYETLRNKKIIKNVVYETVEGDDVISFVNKSVEIDLFDKISLHNEVEQLNKHQDVFLTVLNRLIMRAGNKIDFKLVLKDDKKPIMDKINNREEEINIMIDLDDSKYDIKELSTKQTNNQLTEIEKLFIKKYYFKKKLGIKKEIDKDKLRELMTKYMDKEYFIERYEILFGYKKISDSNDDSKTKEKDRIKRKIIVDFVNILIGKHYNNCLNDSKLKRIIIKDDQYSKALKKIIKESMYFSNEEKYRPLFRKKKGSLKSNPKKEKEIQFYTSTLVRLLREYNIILKVESRKKTNGKSSYLRSLSVDKQIKDVVENKYNHQ.

The region spanning 389–561 (WINKGKTFAI…NKGGNYIMIN (173 aa)) is the Helicase ATP-binding domain. Residue 400 to 407 (SAMGTGKT) coordinates ATP.

The protein belongs to the mimivirus R1 family.

This is an uncharacterized protein from Acanthamoeba polyphaga mimivirus (APMV).